The sequence spans 383 residues: Heme chaperone HemW (383 aa).

The 241-residue stretch at 1-241 folds into the Radical SAM core domain; sequence MPKLPPLSLY…LTMAGYQQYE (241 aa). Y10 contacts S-adenosyl-L-methionine. The [4Fe-4S] cluster site is built by C16, C20, and C23. Residues G70, 71 to 72, E103, Q130, R142, and D167 contribute to the S-adenosyl-L-methionine site; that span reads GT.

This sequence belongs to the anaerobic coproporphyrinogen-III oxidase family. HemW subfamily. [4Fe-4S] cluster serves as cofactor.

It localises to the cytoplasm. In terms of biological role, probably acts as a heme chaperone, transferring heme to an unknown acceptor. Binds one molecule of heme per monomer, possibly covalently. Binds 1 [4Fe-4S] cluster. The cluster is coordinated with 3 cysteines and an exchangeable S-adenosyl-L-methionine. The sequence is that of Heme chaperone HemW from Haemophilus influenzae (strain ATCC 51907 / DSM 11121 / KW20 / Rd).